An 83-amino-acid chain; its full sequence is Small ribosomal subunit protein bS16 (83 aa).

It belongs to the bacterial ribosomal protein bS16 family.

The sequence is that of Small ribosomal subunit protein bS16 from Albidiferax ferrireducens (strain ATCC BAA-621 / DSM 15236 / T118) (Rhodoferax ferrireducens).